Reading from the N-terminus, the 257-residue chain is NAD-capped RNA hydrolase NudC (257 aa).

Residue Arg-69 coordinates substrate. Residues Cys-98 and Cys-101 each coordinate Zn(2+). Glu-111 lines the substrate pocket. Zn(2+)-binding residues include Cys-116 and Cys-119. Residue Tyr-124 participates in substrate binding. The 124-residue stretch at 125–248 (PQIAPCIIVA…TVARRLIEDT (124 aa)) folds into the Nudix hydrolase domain. Residues Ala-158, Glu-174, and Glu-178 each coordinate a divalent metal cation. A Nudix box motif is present at residues 159-180 (GFVEVGETLEQAVAREVMEESG). 192-199 (QPWPFPQS) lines the substrate pocket. Glu-219 serves as a coordination point for a divalent metal cation. Ala-241 provides a ligand contact to substrate.

The protein belongs to the Nudix hydrolase family. NudC subfamily. As to quaternary structure, homodimer. It depends on Mg(2+) as a cofactor. Requires Mn(2+) as cofactor. Zn(2+) is required as a cofactor.

The enzyme catalyses a 5'-end NAD(+)-phospho-ribonucleoside in mRNA + H2O = a 5'-end phospho-adenosine-phospho-ribonucleoside in mRNA + beta-nicotinamide D-ribonucleotide + 2 H(+). The catalysed reaction is NAD(+) + H2O = beta-nicotinamide D-ribonucleotide + AMP + 2 H(+). It catalyses the reaction NADH + H2O = reduced beta-nicotinamide D-ribonucleotide + AMP + 2 H(+). In terms of biological role, mRNA decapping enzyme that specifically removes the nicotinamide adenine dinucleotide (NAD) cap from a subset of mRNAs by hydrolyzing the diphosphate linkage to produce nicotinamide mononucleotide (NMN) and 5' monophosphate mRNA. The NAD-cap is present at the 5'-end of some mRNAs and stabilizes RNA against 5'-processing. Has preference for mRNAs with a 5'-end purine. Catalyzes the hydrolysis of a broad range of dinucleotide pyrophosphates. The chain is NAD-capped RNA hydrolase NudC from Salmonella schwarzengrund (strain CVM19633).